Consider the following 84-residue polypeptide: Small ribosomal subunit protein eS27 (84 aa).

The segment covering 1–16 (MPLAKDLLHPTPEEEK) has biased composition (basic and acidic residues). The segment at 1-23 (MPLAKDLLHPTPEEEKRKHKKKR) is disordered. The segment at 37-59 (CPGCYKITTVFSHAQTVVLCVGC) adopts a C4-type zinc-finger fold.

The protein belongs to the eukaryotic ribosomal protein eS27 family. Component of the small ribosomal subunit. Part of the small subunit (SSU) processome, composed of more than 70 proteins and the RNA chaperone small nucleolar RNA (snoRNA) U3. It depends on Zn(2+) as a cofactor.

It is found in the cytoplasm. The protein localises to the nucleus. It localises to the nucleolus. Component of the small ribosomal subunit. The ribosome is a large ribonucleoprotein complex responsible for the synthesis of proteins in the cell. Required for proper rRNA processing and maturation of 18S rRNAs. Part of the small subunit (SSU) processome, first precursor of the small eukaryotic ribosomal subunit. During the assembly of the SSU processome in the nucleolus, many ribosome biogenesis factors, an RNA chaperone and ribosomal proteins associate with the nascent pre-rRNA and work in concert to generate RNA folding, modifications, rearrangements and cleavage as well as targeted degradation of pre-ribosomal RNA by the RNA exosome. This is Small ribosomal subunit protein eS27 (rps27) from Xenopus laevis (African clawed frog).